The primary structure comprises 494 residues: Probable serine/threonine-protein kinase BSK3 (494 aa).

A lipid anchor (N-myristoyl glycine) is attached at Gly-2. The region spanning 61–316 (ENIVSEHGEK…SLVQALAPLQ (256 aa)) is the Protein kinase domain. Residues 67 to 75 (HGEKAPNVV) and Lys-89 each bind ATP. Catalysis depends on Asp-183, which acts as the Proton acceptor. 2 positions are modified to phosphoserine: Ser-213 and Ser-215. The stretch at 423–456 (PTIYARRCLSYLMNDKAEQALSDAMQALVISPTW) is one TPR repeat.

In terms of assembly, interacts with BRI1 and BSL1. Post-translationally, phosphorylated at Ser-213 and Ser-215 by BRI1. Phosphorylation at Ser-215 is required for its function in the regulation of brassinosteroid signaling. Phosphorylation by BRI1 disrupts the interaction between its TPR and kinase domains, thereby increasing the binding between its kinase domain and BSL1.

The protein resides in the cell membrane. The catalysed reaction is L-seryl-[protein] + ATP = O-phospho-L-seryl-[protein] + ADP + H(+). It catalyses the reaction L-threonyl-[protein] + ATP = O-phospho-L-threonyl-[protein] + ADP + H(+). Probable serine/threonine kinase that acts as a positive regulator of brassinosteroid (BR) signaling downstream of BRI1. The chain is Probable serine/threonine-protein kinase BSK3 from Oryza sativa subsp. japonica (Rice).